A 2143-amino-acid polypeptide reads, in one-letter code: Proteasome activator BLM10 (2143 aa).

The tract at residues 1–65 is disordered; it reads MTANNDDDIK…SPLRARSATP (65 aa). 4 positions are modified to phosphoserine: Ser11, Ser29, Ser56, and Ser62. Phosphothreonine occurs at positions 64 and 66. At Ser1041 the chain carries Phosphoserine. The HEAT 1 repeat unit spans residues 1316 to 1355; the sequence is VVINKIIPSLEKAIKDHDYMKIQVILNVLLIKKIHRKLMT. The interval 1648–1732 is bromodomain-like (BRDL); that stretch reads CELNMSDLFE…LAWWLPAVVD (85 aa). HEAT repeat units lie at residues 1779–1814, 1902–1941, and 1985–2023; these read PDVGKLFDELVFDHPYDQVRQAVAKLLTTLVQNQSN, YLVDYVLPFLIGLVKHKDVCALASLDPVRLYAGLGYMPIR, and EEKNKILEFVVSNLYNEQFVEVRVRAASILSDIVHNWKE. The short motif at 2141–2143 is the YYX motif element; sequence YYA.

This sequence belongs to the BLM10 family. In terms of assembly, according to PubMed:12973301, colocalizes with nascent proteasome. According to PubMed:15778719, associates with proteasome core particles and also forms a complex with regulatory particle-core particle (RP-CP).

The protein resides in the nucleus. It is found in the cytoplasm. Its function is as follows. Associated component of the proteasome that specifically recognizes acetylated histones and promotes ATP- and ubiquitin-independent degradation of core histones during DNA damage response. Recognizes and binds acetylated histones via its bromodomain-like (BRDL) region and activates the proteasome by opening the gated channel for substrate entry. Binds to the core proteasome via its C-terminus, which occupies the same binding sites as the proteasomal ATPases, opening the closed structure of the proteasome via an active gating mechanism. Involved in DNA damage response in somatic cells: binds to acetylated histones and promotes degradation of histones following DNA double-strand breaks. The polypeptide is Proteasome activator BLM10 (BLM10) (Saccharomyces cerevisiae (strain ATCC 204508 / S288c) (Baker's yeast)).